We begin with the raw amino-acid sequence, 130 residues long: Small ribosomal subunit protein uS8 (130 aa).

This sequence belongs to the universal ribosomal protein uS8 family. Part of the 30S ribosomal subunit.

Functionally, one of the primary rRNA binding proteins, it binds directly to 16S rRNA central domain where it helps coordinate assembly of the platform of the 30S subunit. In Methanococcus maripaludis (strain C6 / ATCC BAA-1332), this protein is Small ribosomal subunit protein uS8.